The sequence spans 167 residues: Translation initiation factor IF-3 (167 aa).

The protein belongs to the IF-3 family. In terms of assembly, monomer.

It localises to the cytoplasm. Its function is as follows. IF-3 binds to the 30S ribosomal subunit and shifts the equilibrium between 70S ribosomes and their 50S and 30S subunits in favor of the free subunits, thus enhancing the availability of 30S subunits on which protein synthesis initiation begins. This is Translation initiation factor IF-3 from Bacillus anthracis.